The following is a 114-amino-acid chain: Large ribosomal subunit protein uL22 (114 aa).

This sequence belongs to the universal ribosomal protein uL22 family. In terms of assembly, part of the 50S ribosomal subunit.

In terms of biological role, this protein binds specifically to 23S rRNA; its binding is stimulated by other ribosomal proteins, e.g. L4, L17, and L20. It is important during the early stages of 50S assembly. It makes multiple contacts with different domains of the 23S rRNA in the assembled 50S subunit and ribosome. Its function is as follows. The globular domain of the protein is located near the polypeptide exit tunnel on the outside of the subunit, while an extended beta-hairpin is found that lines the wall of the exit tunnel in the center of the 70S ribosome. This Streptococcus suis (strain 98HAH33) protein is Large ribosomal subunit protein uL22.